The sequence spans 213 residues: Probable GTP-binding protein EngB (213 aa).

One can recognise an EngB-type G domain in the interval 30–204; sequence EGFEVAFAGR…YTVLAGWMEL (175 aa). Residues 38–45, 64–68, 82–85, 149–152, and 182–185 each bind GTP; these read GRSNAGKS, GRTQL, DLPG, TKAD, and LFSA. Residues S45 and T66 each contribute to the Mg(2+) site.

This sequence belongs to the TRAFAC class TrmE-Era-EngA-EngB-Septin-like GTPase superfamily. EngB GTPase family. Mg(2+) is required as a cofactor.

Its function is as follows. Necessary for normal cell division and for the maintenance of normal septation. This is Probable GTP-binding protein EngB from Pseudomonas fluorescens (strain ATCC BAA-477 / NRRL B-23932 / Pf-5).